The following is a 313-amino-acid chain: tRNA dimethylallyltransferase (313 aa).

G10 to T17 is an ATP binding site. Residue T12–T17 participates in substrate binding. 3 interaction with substrate tRNA regions span residues D35 to M38, Q159 to R163, and R240 to R245.

It belongs to the IPP transferase family. As to quaternary structure, monomer. Requires Mg(2+) as cofactor.

The enzyme catalyses adenosine(37) in tRNA + dimethylallyl diphosphate = N(6)-dimethylallyladenosine(37) in tRNA + diphosphate. Catalyzes the transfer of a dimethylallyl group onto the adenine at position 37 in tRNAs that read codons beginning with uridine, leading to the formation of N6-(dimethylallyl)adenosine (i(6)A). In Legionella pneumophila (strain Lens), this protein is tRNA dimethylallyltransferase.